An 89-amino-acid chain; its full sequence is Small ribosomal subunit protein uS15 (89 aa).

It belongs to the universal ribosomal protein uS15 family. As to quaternary structure, part of the 30S ribosomal subunit. Forms a bridge to the 50S subunit in the 70S ribosome, contacting the 23S rRNA.

One of the primary rRNA binding proteins, it binds directly to 16S rRNA where it helps nucleate assembly of the platform of the 30S subunit by binding and bridging several RNA helices of the 16S rRNA. In terms of biological role, forms an intersubunit bridge (bridge B4) with the 23S rRNA of the 50S subunit in the ribosome. The sequence is that of Small ribosomal subunit protein uS15 from Gloeobacter violaceus (strain ATCC 29082 / PCC 7421).